Reading from the N-terminus, the 561-residue chain is DNA ligase B (561 aa).

Lys-124 acts as the N6-AMP-lysine intermediate in catalysis.

The protein belongs to the NAD-dependent DNA ligase family. LigB subfamily.

It carries out the reaction NAD(+) + (deoxyribonucleotide)n-3'-hydroxyl + 5'-phospho-(deoxyribonucleotide)m = (deoxyribonucleotide)n+m + AMP + beta-nicotinamide D-nucleotide.. Functionally, catalyzes the formation of phosphodiester linkages between 5'-phosphoryl and 3'-hydroxyl groups in double-stranded DNA using NAD as a coenzyme and as the energy source for the reaction. The protein is DNA ligase B of Cronobacter sakazakii (strain ATCC BAA-894) (Enterobacter sakazakii).